The primary structure comprises 488 residues: Argininosuccinate lyase (488 aa).

Belongs to the lyase 1 family. Argininosuccinate lyase subfamily.

It is found in the cytoplasm. It carries out the reaction 2-(N(omega)-L-arginino)succinate = fumarate + L-arginine. The protein operates within amino-acid biosynthesis; L-arginine biosynthesis; L-arginine from L-ornithine and carbamoyl phosphate: step 3/3. This chain is Argininosuccinate lyase, found in Corynebacterium jeikeium (strain K411).